Here is a 1098-residue protein sequence, read N- to C-terminus: Protein translocase subunit SecA (1098 aa).

Residues Q176, 194 to 198, and D696 each bind ATP; that span reads GEGKT. The segment at 1024 to 1098 is disordered; sequence EPEQVREAAP…KYKNCHGQNA (75 aa). Basic and acidic residues-rich tracts occupy residues 1041–1051 and 1058–1077; these read QYREEKQDLSD and AEHDTREVKREPVRAEKTVG. Zn(2+)-binding residues include C1082, C1084, C1093, and H1094.

The protein belongs to the SecA family. Monomer and homodimer. Part of the essential Sec protein translocation apparatus which comprises SecA, SecYEG and auxiliary proteins SecDF. Other proteins may also be involved. It depends on Zn(2+) as a cofactor.

Its subcellular location is the cell inner membrane. The protein localises to the cytoplasm. It catalyses the reaction ATP + H2O + cellular proteinSide 1 = ADP + phosphate + cellular proteinSide 2.. Functionally, part of the Sec protein translocase complex. Interacts with the SecYEG preprotein conducting channel. Has a central role in coupling the hydrolysis of ATP to the transfer of proteins into and across the cell membrane, serving as an ATP-driven molecular motor driving the stepwise translocation of polypeptide chains across the membrane. This chain is Protein translocase subunit SecA, found in Phocaeicola vulgatus (strain ATCC 8482 / DSM 1447 / JCM 5826 / CCUG 4940 / NBRC 14291 / NCTC 11154) (Bacteroides vulgatus).